A 574-amino-acid polypeptide reads, in one-letter code: DNA polymerase I (574 aa).

A 3'-5' exonuclease domain is found at glutamate 4–leucine 161.

This sequence belongs to the DNA polymerase type-A family.

The catalysed reaction is DNA(n) + a 2'-deoxyribonucleoside 5'-triphosphate = DNA(n+1) + diphosphate. The protein is DNA polymerase I (polA) of Aquifex aeolicus (strain VF5).